A 121-amino-acid chain; its full sequence is MSAESFNISAIRENKLLARREVLVEVSHHKAPTPTRKDLREWVAKQLGVDVSSVFIRKIKTEYGIGKSVAEVHVYSDSKMARIIEPLYILARNLGEEGKKLLEEVKKKRSERREKKRKRKK.

It belongs to the eukaryotic ribosomal protein eS24 family.

The chain is Small ribosomal subunit protein eS24 from Pyrobaculum arsenaticum (strain DSM 13514 / JCM 11321 / PZ6).